Consider the following 203-residue polypeptide: Dephospho-CoA kinase (203 aa).

The DPCK domain maps to 4–203 (VIGITGGIAT…EEGYIQSESE (200 aa)). ATP is bound at residue 12-17 (ATGKST).

It belongs to the CoaE family.

Its subcellular location is the cytoplasm. The enzyme catalyses 3'-dephospho-CoA + ATP = ADP + CoA + H(+). The protein operates within cofactor biosynthesis; coenzyme A biosynthesis; CoA from (R)-pantothenate: step 5/5. Its function is as follows. Catalyzes the phosphorylation of the 3'-hydroxyl group of dephosphocoenzyme A to form coenzyme A. The protein is Dephospho-CoA kinase of Staphylococcus epidermidis (strain ATCC 35984 / DSM 28319 / BCRC 17069 / CCUG 31568 / BM 3577 / RP62A).